The primary structure comprises 498 residues: Putative ABC transporter ATP-binding protein MM_2387 (498 aa).

2 consecutive ABC transporter domains span residues 2 to 242 (IELR…TSKS) and 258 to 490 (ISIK…VEEK). ATP is bound by residues 36-43 (GHSAAGKT) and 290-297 (GENGSGKT).

Belongs to the ABC transporter superfamily.

Its subcellular location is the cell membrane. In terms of biological role, probably part of an ABC transporter complex. Responsible for energy coupling to the transport system. This chain is Putative ABC transporter ATP-binding protein MM_2387, found in Methanosarcina mazei (strain ATCC BAA-159 / DSM 3647 / Goe1 / Go1 / JCM 11833 / OCM 88) (Methanosarcina frisia).